A 196-amino-acid chain; its full sequence is Large ribosomal subunit protein mL66 (196 aa).

The transit peptide at 1–34 (MAALRRLVSGCGRQLQAFLAGPAATGWLWLPARG) directs the protein to the mitochondrion.

This sequence belongs to the bacterial ribosomal protein bS18 family. Mitochondrion-specific ribosomal protein mL66 subfamily. In terms of assembly, component of the mitochondrial ribosome small subunit (28S) which comprises a 12S rRNA and about 30 distinct proteins.

The protein localises to the mitochondrion. In Mus musculus (Mouse), this protein is Large ribosomal subunit protein mL66 (Mrps18a).